Here is a 306-residue protein sequence, read N- to C-terminus: Non-specific ribonucleoside hydrolase RihC (306 aa).

His-235 is an active-site residue.

The protein belongs to the IUNH family. RihC subfamily.

Its function is as follows. Hydrolyzes both purine and pyrimidine ribonucleosides with a broad-substrate specificity. The protein is Non-specific ribonucleoside hydrolase RihC of Salmonella paratyphi C (strain RKS4594).